The following is a 398-amino-acid chain: Tyrosine--tRNA ligase (398 aa).

The short motif at 48–57 (PTGADIHLGH) is the 'HIGH' region element. A 'KMSKS' region motif is present at residues 235-239 (KMSKS). K238 is an ATP binding site. Residues 334-398 (VKLAYLLGAT…GKNKFVRLVL (65 aa)) form the S4 RNA-binding domain.

It belongs to the class-I aminoacyl-tRNA synthetase family. TyrS type 2 subfamily. Homodimer.

It localises to the cytoplasm. The enzyme catalyses tRNA(Tyr) + L-tyrosine + ATP = L-tyrosyl-tRNA(Tyr) + AMP + diphosphate + H(+). Functionally, catalyzes the attachment of tyrosine to tRNA(Tyr) in a two-step reaction: tyrosine is first activated by ATP to form Tyr-AMP and then transferred to the acceptor end of tRNA(Tyr). This chain is Tyrosine--tRNA ligase, found in Trichormus variabilis (strain ATCC 29413 / PCC 7937) (Anabaena variabilis).